A 790-amino-acid chain; its full sequence is Nuclear cap-binding protein subunit 1 (790 aa).

Residues 1–26 (MSRRRHSYENDGGQPHKRRKTSDANE) form a disordered region. Positions 3–20 (RRRHSYENDGGQPHKRRK) match the Nuclear localization signal motif. Ser7 bears the Phosphoserine mark. Position 21 is a phosphothreonine (Thr21). Phosphoserine is present on residues Ser22 and Ser201. The MIF4G domain occupies 28–240 (EDHLESLICK…CLWAQIQKLK (213 aa)). Lys204 is modified (N6-acetyllysine). Residues 643–713 (STIRKMNKHV…SEQKNLFLVI (71 aa)) adopt a coiled-coil conformation. A Glycyl lysine isopeptide (Lys-Gly) (interchain with G-Cter in SUMO2) cross-link involves residue Lys684. Lys698 is modified (N6-acetyllysine).

Belongs to the NCBP1 family. As to quaternary structure, component of the nuclear cap-binding complex (CBC), a heterodimer composed of NCBP1/CBP80 and NCBP2/CBP20 that interacts with m7GpppG-capped RNA. Found in a U snRNA export complex containing PHAX/RNUXA, NCBP1/CBP80, NCBP2/CBP20, RAN, XPO1 and m7G-capped RNA. Identified in a IGF2BP1-dependent mRNP granule complex containing untranslated mRNAs. Interacts with PHAX/RNUXA, SRRT/ARS2, EIF4G2, IGF2BP1, HNRNPF, HNRNPH1, KIAA0427/CTIF, PARN, DROSHA, UPF1 and ALYREF/THOC4. May interact with EIF4G1; the interaction is however controversial since it is reported by, and, but is not observed by. The large PER complex involved in the repression of transcriptional termination is composed of at least PER2, CDK9, DDX5, DHX9, NCBP1/CBP80 and POLR2A. Component of an alternative nuclear cap-binding complex (CBC) composed of NCBP1/CBP80 and NCBP3. Interacts with METTL3. Interacts with ZFC3H1 in a RNase-insensitive manner. Interacts with MTREX. Interacts with TASOR. Interacts with DHX34; the interaction is RNA-dependent. Interacts with KPNA3. In terms of processing, dephosphorylated at Thr-21 by the PNUTS-PP1 complex during RNA polymerase II transcription pause-release.

The protein resides in the nucleus. The protein localises to the cytoplasm. In terms of biological role, component of the cap-binding complex (CBC), which binds cotranscriptionally to the 5'-cap of pre-mRNAs and is involved in various processes such as pre-mRNA splicing, translation regulation, nonsense-mediated mRNA decay, RNA-mediated gene silencing (RNAi) by microRNAs (miRNAs) and mRNA export. The CBC complex is involved in mRNA export from the nucleus via its interaction with ALYREF/THOC4/ALY, leading to the recruitment of the mRNA export machinery to the 5'-end of mRNA and to mRNA export in a 5' to 3' direction through the nuclear pore. The CBC complex is also involved in mediating U snRNA and intronless mRNAs export from the nucleus. The CBC complex is essential for a pioneer round of mRNA translation, before steady state translation when the CBC complex is replaced by cytoplasmic cap-binding protein eIF4E. The pioneer round of mRNA translation mediated by the CBC complex plays a central role in nonsense-mediated mRNA decay (NMD), NMD only taking place in mRNAs bound to the CBC complex, but not on eIF4E-bound mRNAs. The CBC complex enhances NMD in mRNAs containing at least one exon-junction complex (EJC) via its interaction with UPF1, promoting the interaction between UPF1 and UPF2. The CBC complex is also involved in 'failsafe' NMD, which is independent of the EJC complex, while it does not participate in Staufen-mediated mRNA decay (SMD). During cell proliferation, the CBC complex is also involved in microRNAs (miRNAs) biogenesis via its interaction with SRRT/ARS2 and is required for miRNA-mediated RNA interference. The CBC complex also acts as a negative regulator of PARN, thereby acting as an inhibitor of mRNA deadenylation. In the CBC complex, NCBP1/CBP80 does not bind directly capped RNAs (m7GpppG-capped RNA) but is required to stabilize the movement of the N-terminal loop of NCBP2/CBP20 and lock the CBC into a high affinity cap-binding state with the cap structure. Associates with NCBP3 to form an alternative cap-binding complex (CBC) which plays a key role in mRNA export and is particularly important in cellular stress situations such as virus infections. The conventional CBC with NCBP2 binds both small nuclear RNA (snRNA) and messenger (mRNA) and is involved in their export from the nucleus whereas the alternative CBC with NCBP3 does not bind snRNA and associates only with mRNA thereby playing a role only in mRNA export. NCBP1/CBP80 is required for cell growth and viability. The chain is Nuclear cap-binding protein subunit 1 (Ncbp1) from Rattus norvegicus (Rat).